Here is a 355-residue protein sequence, read N- to C-terminus: DNA polymerase IV (355 aa).

The 182-residue stretch at 4 to 185 (IIHVDMDCFY…LPLKKIPGVG (182 aa)) folds into the UmuC domain. Positions 8 and 103 each coordinate Mg(2+). Glu-104 is an active-site residue.

This sequence belongs to the DNA polymerase type-Y family. In terms of assembly, monomer. Mg(2+) is required as a cofactor.

Its subcellular location is the cytoplasm. It catalyses the reaction DNA(n) + a 2'-deoxyribonucleoside 5'-triphosphate = DNA(n+1) + diphosphate. Functionally, poorly processive, error-prone DNA polymerase involved in untargeted mutagenesis. Copies undamaged DNA at stalled replication forks, which arise in vivo from mismatched or misaligned primer ends. These misaligned primers can be extended by PolIV. Exhibits no 3'-5' exonuclease (proofreading) activity. May be involved in translesional synthesis, in conjunction with the beta clamp from PolIII. The sequence is that of DNA polymerase IV from Pasteurella multocida (strain Pm70).